A 105-amino-acid polypeptide reads, in one-letter code: Heat shock protein HspQ (105 aa).

Residues Glu76 to Asn105 are disordered.

This sequence belongs to the HspQ family.

Its subcellular location is the cytoplasm. Functionally, involved in the degradation of certain denaturated proteins, including DnaA, during heat shock stress. This Salmonella agona (strain SL483) protein is Heat shock protein HspQ.